The primary structure comprises 209 residues: Ribosomal RNA large subunit methyltransferase E (209 aa).

S-adenosyl-L-methionine-binding residues include glycine 63, tryptophan 65, aspartate 83, aspartate 99, and aspartate 124. Lysine 164 serves as the catalytic Proton acceptor.

It belongs to the class I-like SAM-binding methyltransferase superfamily. RNA methyltransferase RlmE family.

Its subcellular location is the cytoplasm. The enzyme catalyses uridine(2552) in 23S rRNA + S-adenosyl-L-methionine = 2'-O-methyluridine(2552) in 23S rRNA + S-adenosyl-L-homocysteine + H(+). Functionally, specifically methylates the uridine in position 2552 of 23S rRNA at the 2'-O position of the ribose in the fully assembled 50S ribosomal subunit. In Shewanella pealeana (strain ATCC 700345 / ANG-SQ1), this protein is Ribosomal RNA large subunit methyltransferase E.